The primary structure comprises 405 residues: Prostaglandin E2 receptor EP1 subtype (405 aa).

Residues 1 to 39 (MSPCGLNLSLADEAATCATPRLPNTSVVLPTGDNGTSPA) are Extracellular-facing. Asn-7, Asn-24, and Asn-34 each carry an N-linked (GlcNAc...) asparagine glycan. The helical transmembrane segment at 40–62 (LPIFSMTLGAVSNVLALALLAQV) threads the bilayer. Residues 63-80 (AGRMRRRRSAATFLLFVA) are Cytoplasmic-facing. The chain crosses the membrane as a helical span at residues 81-99 (SLLAIDLAGHVIPGALVLR). At 100-113 (LYTAGRAPAGGACH) the chain is on the extracellular side. A disulfide bridge connects residues Cys-112 and Cys-190. A helical membrane pass occupies residues 114–135 (FLGGCMVFFGLCPLLLGCGMAV). Topologically, residues 136-157 (ERCVGVTQPLIHAARVSVARAR) are cytoplasmic. Residues 158–179 (LALAVLAAMALAVALLPLVHVG) form a helical membrane-spanning segment. Residues 180–202 (RYELQYPGTWCFISLGPRGGWRQ) lie on the Extracellular side of the membrane. Residues 203-228 (ALLAGLFAGLGLAALLAALVCNTLSG) traverse the membrane as a helical segment. At 229 to 301 (LALLRARWRR…HAHDVEMVGQ (73 aa)) the chain is on the cytoplasmic side. The segment at 243 to 287 (RFRKTAGPDDRRRWGSRGPRLASASSASSITSATATLRSSRGGGS) is disordered. Low complexity predominate over residues 262–282 (RLASASSASSITSATATLRSS). The chain crosses the membrane as a helical span at residues 302–323 (LVGIMVVSCICWSPLLVLVVLA). Topologically, residues 324–337 (IGGWNSNSLQRPLF) are extracellular. Residues 338 to 357 (LAVRLASWNQILDPWVYILL) form a helical membrane-spanning segment. Topologically, residues 358 to 405 (RQAMLRQLLRLLPLRVSAKGGPTELGLTKSAWEASSLRSSRHSGFSHL) are cytoplasmic.

This sequence belongs to the G-protein coupled receptor 1 family. Post-translationally, phosphorylated. Abundant in kidney and in a lesser amount in lung.

The protein resides in the cell membrane. Receptor for prostaglandin E2 (PGE2). The activity of this receptor is mediated by G(q) proteins which activate a phosphatidylinositol-calcium second messenger system. May play a role as an important modulator of renal function. Implicated the smooth muscle contractile response to PGE2 in various tissues. The sequence is that of Prostaglandin E2 receptor EP1 subtype (Ptger1) from Mus musculus (Mouse).